The sequence spans 318 residues: tRNA U34 carboxymethyltransferase (318 aa).

Carboxy-S-adenosyl-L-methionine contacts are provided by residues Lys-85, Trp-99, Lys-104, Gly-124, Leu-175–Asp-176, Met-190, Tyr-194, and Arg-311.

Belongs to the class I-like SAM-binding methyltransferase superfamily. CmoB family. As to quaternary structure, homotetramer.

It carries out the reaction carboxy-S-adenosyl-L-methionine + 5-hydroxyuridine(34) in tRNA = 5-carboxymethoxyuridine(34) in tRNA + S-adenosyl-L-homocysteine + H(+). Functionally, catalyzes carboxymethyl transfer from carboxy-S-adenosyl-L-methionine (Cx-SAM) to 5-hydroxyuridine (ho5U) to form 5-carboxymethoxyuridine (cmo5U) at position 34 in tRNAs. This chain is tRNA U34 carboxymethyltransferase, found in Ruthia magnifica subsp. Calyptogena magnifica.